The following is a 448-amino-acid chain: Inositol hexakisphosphate kinase 2 (448 aa).

ATP is bound by residues Glu-229–Leu-231 and Asp-242. Substrate contacts are provided by residues Pro-238–Gly-246, Lys-244, and Lys-258–Lys-265. Residue Asp-405 coordinates ATP. His-408 provides a ligand contact to substrate.

It belongs to the inositol phosphokinase (IPK) family. In terms of tissue distribution, highly expressed in brain and lung, and at slightly lower levels in liver, kidney and testis.

The protein localises to the nucleus. The enzyme catalyses 1D-myo-inositol hexakisphosphate + ATP = 5-diphospho-1D-myo-inositol 1,2,3,4,6-pentakisphosphate + ADP. It participates in phospholipid metabolism; phosphatidylinositol metabolism. Its function is as follows. Converts inositol hexakisphosphate (InsP6) to diphosphoinositol pentakisphosphate (InsP7/PP-InsP5). May play a role in the regulation of Na(+)-dependent phosphate cotransport, possibly via its role in diphosphoinositol pentakisphosphate (InsP7/PP-InsP5) biosynthesis. This Mus musculus (Mouse) protein is Inositol hexakisphosphate kinase 2 (Ip6k2).